The following is a 693-amino-acid chain: MRVLGLFERGNNLNFADTYVYTWNQQYSYHENAFLISNQVATTIILYLDGININEVNKAFELLNSNGIPALIIKPDHIGIFTSSNFTYDWQYKIVYFHEYTYYKNNEFIVSDEFWLYTNINELLPYKILYYERGMRELYAGREYTLYNTATDDDILYKYIYEKDSIMNGTDYKKLYDTNSVKNFVHFMRLLRMRFAVPFDQLSNRITRSRVFSKSRIHIGLRNESIPQALDNIHSQWINYSANGIVISELKGLGSYSEKKISEFGIGQFKNYMNFLTLMFYIKNMKKKPSCTIIGAAPGYWISSMKKYFTIVTYDNKEVDSTEHHNRYFTDDDIVNVKTNGVYIDVRSEFKTNDWRQRRKLIEEETIKWLEISYKLLENKRVEAILLKMTAMDGEIPDGYCVHSPTTYRKSEYYLLIDKHIIKRQKIKVTKSLMYNAINTIYSDNVFISGKYSLRGKTEGVLALYCLSNTINQKEKVIQYANSFSGTCMTVRLNNTYEVDKIIDFKTNSDHTFLPSDFTCSLNTILTSYRGYAGIFGYAITKDLKSNGNNHIYIIPNARDENNFDTFGSHLGLSRYSHSKRFSESATTMSGYIFRDMVSGKENMQDTDKDNYASGHVFNAIAHYRFDYTYDIVGWLRLHKTGQFKVKSDIYKEHTDSEIRNAIESAYVYYLLDGDKVGEKYSKKMMEIWEVQV.

The segment at 187 to 255 (FMRLLRMRFA…VISELKGLGS (69 aa)) is N7-methyltransferase activity. The 2'-O-methyltransferase activity stretch occupies residues 256–432 (YSEKKISEFG…KRQKIKVTKS (177 aa)). An N7-methyltransferase activity region spans residues 433-559 (LMYNAINTIY…NHIYIIPNAR (127 aa)). The interval 560–693 (DENNFDTFGS…KMMEIWEVQV (134 aa)) is GTase/RTPase activity.

This sequence belongs to the rotavirus VP3 family. Interacts with VP1. Interacts with VP2.

It is found in the virion. The catalysed reaction is a 5'-end diphospho-ribonucleoside in mRNA + GTP + H(+) = a 5'-end (5'-triphosphoguanosine)-ribonucleoside in mRNA + diphosphate. The enzyme catalyses a 5'-end (5'-triphosphoguanosine)-ribonucleoside in mRNA + S-adenosyl-L-methionine = a 5'-end (N(7)-methyl 5'-triphosphoguanosine)-ribonucleoside in mRNA + S-adenosyl-L-homocysteine. Multifunctional enzyme involved in mRNA capping. Catalyzes the formation of the 5' cap structure on the viral plus-strand transcripts. Specifically binds to GTP and displays guanylyltransferase and methyltransferase activities. Has affinity for ssRNA but not for dsRNA. Capping activity is non-specific and caps RNAs that initiate with either a G or an A residue. Together with VP1 polymerase, forms a VP1-VP3 complex positioned near the channels situated at each of the five-fold vertices of the core. Following infection, the outermost layer of the virus is lost, leaving a double-layered particle (DLP) made up of the core and VP6 shell. VP1 then catalyzes the transcription of fully conservative plus-strand genomic RNAs that are capped by VP3 and extruded through the DLP's channels into the cytoplasm where they function as mRNAs for translation of viral proteins. DLPs probably have an RNA triphosphatase activity as well, whereas open cores do not. In Homo sapiens (Human), this protein is Protein VP3.